A 635-amino-acid polypeptide reads, in one-letter code: Threonine--tRNA ligase (635 aa).

Residues 1–61 (MTVVRLPDGT…ETDSDLVLIT (61 aa)) form the TGS domain. The interval 242–533 (DHRKLGKQLD…LIEHHAGALP (292 aa)) is catalytic. Cysteine 333, histidine 384, and histidine 510 together coordinate Zn(2+).

Belongs to the class-II aminoacyl-tRNA synthetase family. Homodimer. It depends on Zn(2+) as a cofactor.

Its subcellular location is the cytoplasm. It carries out the reaction tRNA(Thr) + L-threonine + ATP = L-threonyl-tRNA(Thr) + AMP + diphosphate + H(+). Functionally, catalyzes the attachment of threonine to tRNA(Thr) in a two-step reaction: L-threonine is first activated by ATP to form Thr-AMP and then transferred to the acceptor end of tRNA(Thr). Also edits incorrectly charged L-seryl-tRNA(Thr). The polypeptide is Threonine--tRNA ligase (Nitrosomonas europaea (strain ATCC 19718 / CIP 103999 / KCTC 2705 / NBRC 14298)).